The sequence spans 1073 residues: Carbamoyl phosphate synthase large chain (1073 aa).

A carboxyphosphate synthetic domain region spans residues 1–402 (MPRRIDVRKV…ALQKAIRMLD (402 aa)). ATP contacts are provided by arginine 129, arginine 169, glycine 175, glycine 176, lysine 208, leucine 210, glutamate 215, glycine 241, valine 242, histidine 243, glutamine 284, and glutamate 299. The ATP-grasp 1 domain occupies 133–328 (RETMMKAGLP…LAYIAAKLAL (196 aa)). Mg(2+) is bound by residues glutamine 284, glutamate 299, and asparagine 301. Mn(2+) contacts are provided by glutamine 284, glutamate 299, and asparagine 301. The interval 403 to 555 (IGEPGVVAGP…MSYNAYEDDE (153 aa)) is oligomerization domain. Positions 556 to 944 (PITTGRPRLI…LKSWLSVQGN (389 aa)) are carbamoyl phosphate synthetic domain. One can recognise an ATP-grasp 2 domain in the interval 681–871 (SQLLEELGIK…LMRAAAEAAL (191 aa)). Residues arginine 717, lysine 756, leucine 758, glutamate 763, glycine 787, valine 788, histidine 789, serine 790, glutamine 830, and glutamate 842 each coordinate ATP. Mg(2+) is bound by residues glutamine 830, glutamate 842, and asparagine 844. Mn(2+) is bound by residues glutamine 830, glutamate 842, and asparagine 844. Positions 944 to 1073 (NRIPPAGSIV…EYWGPNVEPF (130 aa)) constitute an MGS-like domain. Positions 945–1073 (RIPPAGSIVL…EYWGPNVEPF (129 aa)) are allosteric domain.

The protein belongs to the CarB family. Composed of two chains; the small (or glutamine) chain promotes the hydrolysis of glutamine to ammonia, which is used by the large (or ammonia) chain to synthesize carbamoyl phosphate. Tetramer of heterodimers (alpha,beta)4. It depends on Mg(2+) as a cofactor. The cofactor is Mn(2+).

The catalysed reaction is hydrogencarbonate + L-glutamine + 2 ATP + H2O = carbamoyl phosphate + L-glutamate + 2 ADP + phosphate + 2 H(+). It catalyses the reaction hydrogencarbonate + NH4(+) + 2 ATP = carbamoyl phosphate + 2 ADP + phosphate + 2 H(+). The protein operates within amino-acid biosynthesis; L-arginine biosynthesis; carbamoyl phosphate from bicarbonate: step 1/1. It functions in the pathway pyrimidine metabolism; UMP biosynthesis via de novo pathway; (S)-dihydroorotate from bicarbonate: step 1/3. Large subunit of the glutamine-dependent carbamoyl phosphate synthetase (CPSase). CPSase catalyzes the formation of carbamoyl phosphate from the ammonia moiety of glutamine, carbonate, and phosphate donated by ATP, constituting the first step of 2 biosynthetic pathways, one leading to arginine and/or urea and the other to pyrimidine nucleotides. The large subunit (synthetase) binds the substrates ammonia (free or transferred from glutamine from the small subunit), hydrogencarbonate and ATP and carries out an ATP-coupled ligase reaction, activating hydrogencarbonate by forming carboxy phosphate which reacts with ammonia to form carbamoyl phosphate. The polypeptide is Carbamoyl phosphate synthase large chain (Hyperthermus butylicus (strain DSM 5456 / JCM 9403 / PLM1-5)).